The sequence spans 173 residues: Photosystem I assembly protein Ycf3 (173 aa).

3 TPR repeats span residues 35 to 68 (AFVY…EEDP), 72 to 105 (SYIL…NPRM), and 120 to 153 (GEKA…APNN).

Belongs to the Ycf3 family.

Its subcellular location is the cellular thylakoid membrane. Essential for the assembly of the photosystem I (PSI) complex. May act as a chaperone-like factor to guide the assembly of the PSI subunits. The chain is Photosystem I assembly protein Ycf3 from Microcystis aeruginosa (strain NIES-843 / IAM M-2473).